The sequence spans 240 residues: Homeobox protein DLX-4 (240 aa).

The tract at residues 80–120 (QPLCGPAEHPQELEADSEKPRLSPEPSERRPQAPAKKLRKP) is disordered. Residues 88–110 (HPQELEADSEKPRLSPEPSERRP) are compositionally biased toward basic and acidic residues. A DNA-binding region (homeobox) is located at residues 117 to 176 (LRKPRTIYSSLQLQHLNQRFQHTQYLALPERAQLAAQLGLTQTQVKIWFQNKRSKYKKLL).

It belongs to the distal-less homeobox family. Expressed in leukemia cells and placenta. Also expressed in kidney and fetal liver.

The protein localises to the nucleus. In terms of biological role, may play a role in determining the production of hemoglobin S. May act as a repressor. During embryonic development, plays a role in palatogenesis. This is Homeobox protein DLX-4 (DLX4) from Homo sapiens (Human).